Consider the following 547-residue polypeptide: CTP synthase (547 aa).

The tract at residues 1–267 (MKTKFIFITG…DQKIAIMLRL (267 aa)) is amidoligase domain. Ser14 serves as a coordination point for CTP. Ser14 contacts UTP. ATP contacts are provided by residues 15-20 (SLGKGL) and Asp72. 2 residues coordinate Mg(2+): Asp72 and Glu141. CTP contacts are provided by residues 148–150 (DIE), 188–193 (KTKPTQ), and Lys224. UTP is bound by residues 188–193 (KTKPTQ) and Lys224. The region spanning 292–545 (TIGIVGKYVD…IRAAKTHPAG (254 aa)) is the Glutamine amidotransferase type-1 domain. Gly354 contacts L-glutamine. Cys381 acts as the Nucleophile; for glutamine hydrolysis in catalysis. Residues 382-385 (LGMQ), Glu405, and Arg473 contribute to the L-glutamine site. Active-site residues include His518 and Glu520.

The protein belongs to the CTP synthase family. Homotetramer.

It carries out the reaction UTP + L-glutamine + ATP + H2O = CTP + L-glutamate + ADP + phosphate + 2 H(+). It catalyses the reaction L-glutamine + H2O = L-glutamate + NH4(+). The catalysed reaction is UTP + NH4(+) + ATP = CTP + ADP + phosphate + 2 H(+). It participates in pyrimidine metabolism; CTP biosynthesis via de novo pathway; CTP from UDP: step 2/2. Its activity is regulated as follows. Allosterically activated by GTP, when glutamine is the substrate; GTP has no effect on the reaction when ammonia is the substrate. The allosteric effector GTP functions by stabilizing the protein conformation that binds the tetrahedral intermediate(s) formed during glutamine hydrolysis. Inhibited by the product CTP, via allosteric rather than competitive inhibition. Functionally, catalyzes the ATP-dependent amination of UTP to CTP with either L-glutamine or ammonia as the source of nitrogen. Regulates intracellular CTP levels through interactions with the four ribonucleotide triphosphates. In Nitratidesulfovibrio vulgaris (strain DP4) (Desulfovibrio vulgaris), this protein is CTP synthase.